The primary structure comprises 103 residues: Cell division protein FtsB (103 aa).

Residues 1–3 are Cytoplasmic-facing; the sequence is MGK. A helical membrane pass occupies residues 4-21; sequence LTLLLLALLVWLQYSLWF. Residues 22-103 lie on the Periplasmic side of the membrane; sequence GKNGIHDYSR…RAGGPAQNNR (82 aa). Residues 38–62 adopt a coiled-coil conformation; that stretch reads VQQATNAKLKARNDQLFAEIDDLNG.

This sequence belongs to the FtsB family. In terms of assembly, part of a complex composed of FtsB, FtsL and FtsQ.

The protein localises to the cell inner membrane. Essential cell division protein. May link together the upstream cell division proteins, which are predominantly cytoplasmic, with the downstream cell division proteins, which are predominantly periplasmic. The polypeptide is Cell division protein FtsB (Cronobacter sakazakii (strain ATCC BAA-894) (Enterobacter sakazakii)).